The chain runs to 903 residues: Translation initiation factor IF-2 (903 aa).

The disordered stretch occupies residues 49-314 (LNREHGSGPD…GSSLQQGFNK (266 aa)). Positions 68–82 (STLNIQGTGGKSKSV) are enriched in polar residues. 2 stretches are compositionally biased toward basic and acidic residues: residues 93–163 (VKRD…EAAE) and 174–225 (EVSK…ENAT). A compositionally biased stretch (basic residues) spans 265–279 (GRARPAKVARQKKSN). The span at 280–293 (KHSESKADREEARA) shows a compositional bias: basic and acidic residues. A tr-type G domain is found at 402–571 (PRAPVVTIMG…LLQSEVLELK (170 aa)). Residues 411–418 (GHVDHGKT) form a G1 region. Residue 411 to 418 (GHVDHGKT) coordinates GTP. Residues 436-440 (GITQH) are G2. The G3 stretch occupies residues 457–460 (DTPG). Residues 457–461 (DTPGH) and 511–514 (NKID) each bind GTP. The tract at residues 511-514 (NKID) is G4. Positions 547–549 (SAK) are G5.

This sequence belongs to the TRAFAC class translation factor GTPase superfamily. Classic translation factor GTPase family. IF-2 subfamily.

It localises to the cytoplasm. Its function is as follows. One of the essential components for the initiation of protein synthesis. Protects formylmethionyl-tRNA from spontaneous hydrolysis and promotes its binding to the 30S ribosomal subunits. Also involved in the hydrolysis of GTP during the formation of the 70S ribosomal complex. This chain is Translation initiation factor IF-2, found in Cronobacter sakazakii (strain ATCC BAA-894) (Enterobacter sakazakii).